The following is a 407-amino-acid chain: Argininosuccinate synthase (407 aa).

Residue 8–16 (AYSGGLDTT) coordinates ATP. 2 residues coordinate L-citrulline: Tyr86 and Ser91. Position 116 (Gly116) interacts with ATP. L-aspartate is bound by residues Thr118, Asn122, and Asp123. Residue Asn122 participates in L-citrulline binding. Residues Arg126, Ser178, Ser187, Glu264, and Tyr276 each contribute to the L-citrulline site.

Belongs to the argininosuccinate synthase family. Type 1 subfamily. In terms of assembly, homotetramer.

It localises to the cytoplasm. It carries out the reaction L-citrulline + L-aspartate + ATP = 2-(N(omega)-L-arginino)succinate + AMP + diphosphate + H(+). Its pathway is amino-acid biosynthesis; L-arginine biosynthesis; L-arginine from L-ornithine and carbamoyl phosphate: step 2/3. The protein is Argininosuccinate synthase of Lachnoclostridium phytofermentans (strain ATCC 700394 / DSM 18823 / ISDg) (Clostridium phytofermentans).